The primary structure comprises 710 residues: Ferrioxamine receptor (710 aa).

The N-terminal stretch at 1–26 (MFSAFIIKRSAILCSLAMFIPLASIA) is a signal peptide. The TonB box motif lies at 28–35 (DTIEVTAK). 30 beta stranded membrane-spanning segments follow: residues 29 to 37 (TIEVTAKAG), 65 to 73 (TAQSVSVVT), 91 to 99 (YTPGVFTGF), 106 to 114 (YDTVALRGF), 137 to 145 (NVLQVDPWF), 152 to 160 (IKGPSSALY), 180 to 188 (SEGHFRLTA), 194 to 202 (QVAAFDYTD), 208 to 216 (WAFRLTGIT), 259 to 267 (GGYHSAVPA), 271 to 279 (IYGQKLSRG), 293 to 301 (WQQIYSYEF), 309 to 317 (WSFRQNASY), 353 to 361 (FAVDNQLEA), 370 to 378 (HKVLLGVDF), 427 to 435 (YEQSGVYLQ), 443 to 451 (WHLNLSGRY), 476 to 484 (GRASLLYSF), 491 to 499 (YVSYSQAIT), 517 to 525 (EQYEVGIIY), 531 to 539 (TSLYSAALY), 555 to 563 (YYVPAGKVN), 567 to 575 (LELEARSQI), 579 to 587 (LSVIAGYTY), 610 to 618 (NMASLWAQY), 624 to 632 (INVGAGIRY), 649 to 657 (YTLGDASVR), 671 to 679 (FVQLNVNNI), 684 to 692 (YVAACYSTS), and 702 to 710 (VQATVGYDF). In terms of domain architecture, TBDR plug spans 61–174 (PLILTAQSVS…PGGVVMMTSK (114 aa)). A TBDR beta-barrel domain is found at 181 to 710 (EGHFRLTAGN…SVQATVGYDF (530 aa)). The TonB C-terminal box motif lies at 693–710 (YCYWGAERSVQATVGYDF).

Belongs to the TonB-dependent receptor family.

It localises to the cell outer membrane. Ferrioxamine binding and uptake, in association with the TonB protein. This is Ferrioxamine receptor (foxA) from Yersinia enterocolitica.